The sequence spans 374 residues: Aminomethyltransferase (374 aa).

It belongs to the GcvT family. The glycine cleavage system is composed of four proteins: P, T, L and H.

It catalyses the reaction N(6)-[(R)-S(8)-aminomethyldihydrolipoyl]-L-lysyl-[protein] + (6S)-5,6,7,8-tetrahydrofolate = N(6)-[(R)-dihydrolipoyl]-L-lysyl-[protein] + (6R)-5,10-methylene-5,6,7,8-tetrahydrofolate + NH4(+). In terms of biological role, the glycine cleavage system catalyzes the degradation of glycine. The protein is Aminomethyltransferase of Prochlorococcus marinus (strain MIT 9303).